The primary structure comprises 65 residues: Photosystem II reaction center protein J (65 aa).

The segment covering 1–17 has biased composition (basic and acidic residues); the sequence is MSTKLKGPDGRIPDRLP. The tract at residues 1–20 is disordered; the sequence is MSTKLKGPDGRIPDRLPDGT. Residues 36–56 traverse the membrane as a helical segment; that stretch reads LWLVATVGGMAVLSVLGLFFF.

Belongs to the PsbJ family. As to quaternary structure, PSII is composed of 1 copy each of membrane proteins PsbA, PsbB, PsbC, PsbD, PsbE, PsbF, PsbH, PsbI, PsbJ, PsbK, PsbL, PsbM, PsbT, PsbX, PsbY, Psb30/Ycf12, peripheral proteins PsbO, CyanoQ (PsbQ), PsbU, PsbV and a large number of cofactors. It forms dimeric complexes.

The protein resides in the cellular thylakoid membrane. One of the components of the core complex of photosystem II (PSII). PSII is a light-driven water:plastoquinone oxidoreductase that uses light energy to abstract electrons from H(2)O, generating O(2) and a proton gradient subsequently used for ATP formation. It consists of a core antenna complex that captures photons, and an electron transfer chain that converts photonic excitation into a charge separation. The chain is Photosystem II reaction center protein J from Prochlorococcus marinus (strain MIT 9303).